Consider the following 444-residue polypeptide: Argininosuccinate synthase (444 aa).

ATP is bound by residues 18 to 26 (AFSGGLDTS) and A44. Position 100 (Y100) interacts with L-citrulline. Residues G130 and T132 each coordinate ATP. L-aspartate is bound by residues T132, N136, and D137. N136 contacts L-citrulline. Position 137 (D137) interacts with ATP. L-citrulline-binding residues include R140 and S193. D195 contributes to the ATP binding site. L-citrulline-binding residues include T202, E204, and E281.

Belongs to the argininosuccinate synthase family. Type 2 subfamily. As to quaternary structure, homotetramer.

Its subcellular location is the cytoplasm. It carries out the reaction L-citrulline + L-aspartate + ATP = 2-(N(omega)-L-arginino)succinate + AMP + diphosphate + H(+). The protein operates within amino-acid biosynthesis; L-arginine biosynthesis; L-arginine from L-ornithine and carbamoyl phosphate: step 2/3. The chain is Argininosuccinate synthase from Haemophilus influenzae (strain PittEE).